We begin with the raw amino-acid sequence, 420 residues long: Acetyl-CoA acetyltransferase A, mitochondrial (420 aa).

The transit peptide at 1 to 33 (MAFCGTRTAARLSHSTRALHNTHRNFASQRTLN) directs the protein to the mitochondrion. Cys-119 (acyl-thioester intermediate) is an active-site residue. CoA-binding positions include Tyr-212, 251–253 (RVD), and Lys-256. Tyr-212 lines the K(+) pocket. K(+) is bound by residues Ala-273 and Ala-274. Ser-277 contributes to the CoA binding site. Residue Val-374 coordinates K(+). The active-site Proton donor/acceptor is Cys-406.

The protein belongs to the thiolase-like superfamily. Thiolase family. Homotetramer.

The protein resides in the mitochondrion. It catalyses the reaction 2 acetyl-CoA = acetoacetyl-CoA + CoA. The catalysed reaction is propanoyl-CoA + acetyl-CoA = 2-methyl-3-oxobutanoyl-CoA + CoA. It participates in lipid metabolism; fatty acid beta-oxidation. In terms of biological role, this is one of the enzymes that catalyzes the last step of the mitochondrial beta-oxidation pathway, an aerobic process breaking down fatty acids into acetyl-CoA. Using free coenzyme A/CoA, catalyzes the thiolytic cleavage of medium- to long-chain 3-oxoacyl-CoAs into acetyl-CoA and a fatty acyl-CoA shortened by two carbon atoms. The activity of the enzyme is reversible and it can also catalyze the condensation of two acetyl-CoA molecules into acetoacetyl-CoA. Thereby, it plays a major role in ketone body metabolism. The protein is Acetyl-CoA acetyltransferase A, mitochondrial (acat1-a) of Xenopus laevis (African clawed frog).